A 490-amino-acid chain; its full sequence is Betaine aldehyde dehydrogenase (490 aa).

N93 serves as a coordination point for K(+). 150-152 (GAW) lines the NAD(+) pocket. K162 serves as the catalytic Charge relay system. Residue 176 to 179 (KPSE) coordinates NAD(+). V180 contributes to the K(+) binding site. 230-233 (GTAT) lines the NAD(+) pocket. L246 lines the K(+) pocket. E252 serves as the catalytic Proton acceptor. NAD(+)-binding residues include G254, C286, and E387. C286 acts as the Nucleophile in catalysis. C286 carries the cysteine sulfenic acid (-SOH) modification. Residues K457 and G460 each coordinate K(+). E464 functions as the Charge relay system in the catalytic mechanism.

Belongs to the aldehyde dehydrogenase family. Dimer of dimers. It depends on K(+) as a cofactor.

It catalyses the reaction betaine aldehyde + NAD(+) + H2O = glycine betaine + NADH + 2 H(+). It participates in amine and polyamine biosynthesis; betaine biosynthesis via choline pathway; betaine from betaine aldehyde: step 1/1. In terms of biological role, involved in the biosynthesis of the osmoprotectant glycine betaine. Catalyzes the irreversible oxidation of betaine aldehyde to the corresponding acid. The polypeptide is Betaine aldehyde dehydrogenase (Xanthomonas campestris pv. campestris (strain ATCC 33913 / DSM 3586 / NCPPB 528 / LMG 568 / P 25)).